The primary structure comprises 92 residues: PqqA binding protein (92 aa).

This sequence belongs to the PqqD family. Monomer. Interacts with PqqE.

Its pathway is cofactor biosynthesis; pyrroloquinoline quinone biosynthesis. Its function is as follows. Functions as a PqqA binding protein and presents PqqA to PqqE, in the pyrroloquinoline quinone (PQQ) biosynthetic pathway. This is PqqA binding protein from Pseudomonas paraeruginosa (strain DSM 24068 / PA7) (Pseudomonas aeruginosa (strain PA7)).